A 234-amino-acid polypeptide reads, in one-letter code: Sugar fermentation stimulation protein A (234 aa).

The segment at residues 201 to 220 (LLSEAQQRGVEILAYKAELS) is a DNA-binding region (H-T-H motif).

The protein belongs to the SfsA family.

Functionally, binds to DNA non-specifically. Could be a regulatory factor involved in maltose metabolism. This Escherichia coli O7:K1 (strain IAI39 / ExPEC) protein is Sugar fermentation stimulation protein A.